A 183-amino-acid chain; its full sequence is uncharacterized protein (183 aa).

Belongs to the asfivirus S183L family.

This is an uncharacterized protein from African swine fever virus (isolate Warthog/Namibia/Wart80/1980) (ASFV).